The primary structure comprises 764 residues: Plasma membrane fusion protein prm-1 (764 aa).

Residues methionine 1–glutamine 61 are Extracellular-facing. Residues leucine 62–threonine 82 traverse the membrane as a helical segment. Topologically, residues alanine 83–alanine 149 are cytoplasmic. The helical transmembrane segment at isoleucine 150 to isoleucine 170 threads the bilayer. Residues histidine 171 to lysine 334 are Extracellular-facing. Asparagine 271 and asparagine 315 each carry an N-linked (GlcNAc...) asparagine glycan. Residues isoleucine 335–isoleucine 355 form a helical membrane-spanning segment. Residues glutamate 356–alanine 424 lie on the Cytoplasmic side of the membrane. The chain crosses the membrane as a helical span at residues leucine 425 to leucine 445. The Extracellular portion of the chain corresponds to arginine 446 to threonine 624. 3 N-linked (GlcNAc...) asparagine glycosylation sites follow: asparagine 479, asparagine 508, and asparagine 527. The chain crosses the membrane as a helical span at residues leucine 625–glycine 645. Topologically, residues tryptophan 646–isoleucine 764 are cytoplasmic. Disordered stretches follow at residues arginine 653–glycine 701 and histidine 735–aspartate 754.

The protein belongs to the PRM1 family.

Its subcellular location is the cell membrane. Its function is as follows. Involved in cell fusion during mating by stabilizing the plasma membrane fusion event. The protein is Plasma membrane fusion protein prm-1 (prm-1) of Neurospora crassa (strain ATCC 24698 / 74-OR23-1A / CBS 708.71 / DSM 1257 / FGSC 987).